Here is a 257-residue protein sequence, read N- to C-terminus: Tryptophan synthase alpha chain (257 aa).

Active-site proton acceptor residues include Glu44 and Asp55.

It belongs to the TrpA family. As to quaternary structure, tetramer of two alpha and two beta chains.

It carries out the reaction (1S,2R)-1-C-(indol-3-yl)glycerol 3-phosphate + L-serine = D-glyceraldehyde 3-phosphate + L-tryptophan + H2O. The protein operates within amino-acid biosynthesis; L-tryptophan biosynthesis; L-tryptophan from chorismate: step 5/5. The alpha subunit is responsible for the aldol cleavage of indoleglycerol phosphate to indole and glyceraldehyde 3-phosphate. The chain is Tryptophan synthase alpha chain from Chlamydia felis (strain Fe/C-56) (Chlamydophila felis).